A 384-amino-acid polypeptide reads, in one-letter code: S-adenosylmethionine synthase (384 aa).

An ATP-binding site is contributed by histidine 15. Aspartate 17 is a binding site for Mg(2+). Residue glutamate 43 participates in K(+) binding. Glutamate 56 and glutamine 99 together coordinate L-methionine. A flexible loop region spans residues 99–109 (QSPDINQGVDR). Residues 164 to 166 (DAK), 230 to 231 (RF), aspartate 239, 245 to 246 (RK), alanine 262, and lysine 266 contribute to the ATP site. Aspartate 239 is a binding site for L-methionine. Position 270 (lysine 270) interacts with L-methionine.

Belongs to the AdoMet synthase family. As to quaternary structure, homotetramer; dimer of dimers. It depends on Mg(2+) as a cofactor. K(+) is required as a cofactor.

The protein resides in the cytoplasm. It carries out the reaction L-methionine + ATP + H2O = S-adenosyl-L-methionine + phosphate + diphosphate. Its pathway is amino-acid biosynthesis; S-adenosyl-L-methionine biosynthesis; S-adenosyl-L-methionine from L-methionine: step 1/1. Its function is as follows. Catalyzes the formation of S-adenosylmethionine (AdoMet) from methionine and ATP. The overall synthetic reaction is composed of two sequential steps, AdoMet formation and the subsequent tripolyphosphate hydrolysis which occurs prior to release of AdoMet from the enzyme. This chain is S-adenosylmethionine synthase, found in Citrobacter koseri (strain ATCC BAA-895 / CDC 4225-83 / SGSC4696).